The primary structure comprises 675 residues: DNA ligase (675 aa).

NAD(+)-binding positions include 35–39, 84–85, and glutamate 116; these read DEAYD and SL. Residue lysine 118 is the N6-AMP-lysine intermediate of the active site. NAD(+)-binding residues include arginine 139, glutamate 180, lysine 296, and lysine 320. Zn(2+) is bound by residues cysteine 414, cysteine 417, cysteine 432, and cysteine 437. Positions 597–675 constitute a BRCT domain; the sequence is PVDAFWNGKT…EREFLERLGM (79 aa).

It belongs to the NAD-dependent DNA ligase family. LigA subfamily. The cofactor is Mg(2+). Requires Mn(2+) as cofactor.

It catalyses the reaction NAD(+) + (deoxyribonucleotide)n-3'-hydroxyl + 5'-phospho-(deoxyribonucleotide)m = (deoxyribonucleotide)n+m + AMP + beta-nicotinamide D-nucleotide.. In terms of biological role, DNA ligase that catalyzes the formation of phosphodiester linkages between 5'-phosphoryl and 3'-hydroxyl groups in double-stranded DNA using NAD as a coenzyme and as the energy source for the reaction. It is essential for DNA replication and repair of damaged DNA. The protein is DNA ligase of Syntrophobacter fumaroxidans (strain DSM 10017 / MPOB).